The primary structure comprises 299 residues: N-acetylmuramic acid 6-phosphate etherase (299 aa).

Residues 54–217 form the SIS domain; that stretch reads TIAQYKKGGR…STITMVGVGK (164 aa). The Proton donor role is filled by E82. The active site involves E113.

Belongs to the GCKR-like family. MurNAc-6-P etherase subfamily. Homodimer.

The catalysed reaction is N-acetyl-D-muramate 6-phosphate + H2O = N-acetyl-D-glucosamine 6-phosphate + (R)-lactate. The protein operates within amino-sugar metabolism; N-acetylmuramate degradation. Functionally, specifically catalyzes the cleavage of the D-lactyl ether substituent of MurNAc 6-phosphate, producing GlcNAc 6-phosphate and D-lactate. The protein is N-acetylmuramic acid 6-phosphate etherase of Staphylococcus aureus (strain bovine RF122 / ET3-1).